A 179-amino-acid polypeptide reads, in one-letter code: Translation initiation factor IF-3 (179 aa).

The protein belongs to the IF-3 family. As to quaternary structure, monomer.

The protein localises to the cytoplasm. Functionally, IF-3 binds to the 30S ribosomal subunit and shifts the equilibrium between 70S ribosomes and their 50S and 30S subunits in favor of the free subunits, thus enhancing the availability of 30S subunits on which protein synthesis initiation begins. The polypeptide is Translation initiation factor IF-3 (Leptospira interrogans serogroup Icterohaemorrhagiae serovar copenhageni (strain Fiocruz L1-130)).